Consider the following 289-residue polypeptide: Phosphoribulokinase (289 aa).

12-20 (GSSGAGTTT) contributes to the ATP binding site.

The protein belongs to the phosphoribulokinase family.

It catalyses the reaction D-ribulose 5-phosphate + ATP = D-ribulose 1,5-bisphosphate + ADP + H(+). It participates in carbohydrate biosynthesis; Calvin cycle. This is Phosphoribulokinase (cbbP) from Sinorhizobium medicae (strain WSM419) (Ensifer medicae).